The sequence spans 296 residues: Probable endonuclease 4 (296 aa).

Zn(2+) contacts are provided by His-68, His-109, Glu-144, Asp-178, His-181, His-213, Asp-226, His-228, and Glu-258.

Belongs to the AP endonuclease 2 family. Requires Zn(2+) as cofactor.

It carries out the reaction Endonucleolytic cleavage to 5'-phosphooligonucleotide end-products.. Its function is as follows. Endonuclease IV plays a role in DNA repair. It cleaves phosphodiester bonds at apurinic or apyrimidinic (AP) sites, generating a 3'-hydroxyl group and a 5'-terminal sugar phosphate. This chain is Probable endonuclease 4, found in Pediococcus pentosaceus (strain ATCC 25745 / CCUG 21536 / LMG 10740 / 183-1w).